Reading from the N-terminus, the 76-residue chain is Small ribosomal subunit protein bS18 (76 aa).

It belongs to the bacterial ribosomal protein bS18 family. In terms of assembly, part of the 30S ribosomal subunit. Forms a tight heterodimer with protein bS6.

Functionally, binds as a heterodimer with protein bS6 to the central domain of the 16S rRNA, where it helps stabilize the platform of the 30S subunit. The polypeptide is Small ribosomal subunit protein bS18 (Xanthomonas campestris pv. campestris (strain 8004)).